The chain runs to 105 residues: Heat shock protein HspQ (105 aa).

This sequence belongs to the HspQ family.

The protein localises to the cytoplasm. Involved in the degradation of certain denaturated proteins, including DnaA, during heat shock stress. In Sodalis glossinidius (strain morsitans), this protein is Heat shock protein HspQ.